The sequence spans 124 residues: Succinate dehydrogenase cytochrome b556 subunit (124 aa).

Residues 1–29 (MTKTKQEIYNKRPTSPHLSIYKLQISSTL) lie on the Cytoplasmic side of the membrane. A helical transmembrane segment spans residues 30–55 (SILHRMTGVALFFAVSILAWWLILSK). At 56-67 (YDNNYLQFANCC) the chain is on the periplasmic side. A helical transmembrane segment spans residues 68–88 (IIKICLVAVSYAWFYHLCNGI). Residue His-83 participates in heme binding. The Cytoplasmic portion of the chain corresponds to 89 to 103 (RHLFWDIGYGFSIKA). Residues 104 to 124 (VNITGWCVVVCSILLTMLLWV) form a helical membrane-spanning segment.

This sequence belongs to the cytochrome b560 family. As to quaternary structure, part of an enzyme complex containing four subunits: a flavoprotein, an iron-sulfur protein, plus two membrane-anchoring proteins, SdhC and SdhD. The complex can form homotrimers. Heme is required as a cofactor.

The protein localises to the cell inner membrane. The protein operates within carbohydrate metabolism; tricarboxylic acid cycle. Membrane-anchoring subunit of succinate dehydrogenase (SDH). This chain is Succinate dehydrogenase cytochrome b556 subunit (sdhC), found in Rickettsia felis (strain ATCC VR-1525 / URRWXCal2) (Rickettsia azadi).